We begin with the raw amino-acid sequence, 332 residues long: Methionyl-tRNA formyltransferase (332 aa).

124-127 contributes to the (6S)-5,6,7,8-tetrahydrofolate binding site; it reads SLLP.

This sequence belongs to the Fmt family.

The catalysed reaction is L-methionyl-tRNA(fMet) + (6R)-10-formyltetrahydrofolate = N-formyl-L-methionyl-tRNA(fMet) + (6S)-5,6,7,8-tetrahydrofolate + H(+). Attaches a formyl group to the free amino group of methionyl-tRNA(fMet). The formyl group appears to play a dual role in the initiator identity of N-formylmethionyl-tRNA by promoting its recognition by IF2 and preventing the misappropriation of this tRNA by the elongation apparatus. The polypeptide is Methionyl-tRNA formyltransferase (Polynucleobacter asymbioticus (strain DSM 18221 / CIP 109841 / QLW-P1DMWA-1) (Polynucleobacter necessarius subsp. asymbioticus)).